The chain runs to 697 residues: Polyribonucleotide nucleotidyltransferase (697 aa).

Mg(2+) contacts are provided by D490 and D496. The KH domain occupies 557 to 616 (PKVVTMTIKPEKIRDVIGPGGKKINEIIDETGVKLDIEQDGTIFIGAVDKDAIARARSII). Residues 626 to 694 (GQVYEGKVKR…KQGRVNASHK (69 aa)) enclose the S1 motif domain.

It belongs to the polyribonucleotide nucleotidyltransferase family. It depends on Mg(2+) as a cofactor.

Its subcellular location is the cytoplasm. The catalysed reaction is RNA(n+1) + phosphate = RNA(n) + a ribonucleoside 5'-diphosphate. Its function is as follows. Involved in mRNA degradation. Catalyzes the phosphorolysis of single-stranded polyribonucleotides processively in the 3'- to 5'-direction. The protein is Polyribonucleotide nucleotidyltransferase of Staphylococcus saprophyticus subsp. saprophyticus (strain ATCC 15305 / DSM 20229 / NCIMB 8711 / NCTC 7292 / S-41).